The following is a 226-amino-acid chain: MKMETFLVCLFHNAKGLHQQIQEILYLLRMHIYETNLYLKQELSQLIYPNRQLSFVLLMPLSLLRNWDDIEYLTDIVDDKQTLHYAANLLTNYVLHLSMYQKLTKQYFLLAVKRVSEKLNKKQQHSFYEVLVTSEALNNYENLPKNILNTLMFAVRYVFNPTPNYSEILAELKKKNKIHHIIFNMVITDFQQIREQQMCKHLCETNNELRQECKEIIFDLKVVGNV.

A signal peptide spans 1-16; sequence MKMETFLVCLFHNAKG. N164 is a glycosylation site (N-linked (GlcNAc...) asparagine; by host).

Belongs to the asfivirus I226R family.

Its function is as follows. Plays a role in the inhibition of host NF-kappa-B and IRF3 signaling pathways. Mechanistically, promotes the degradation of host IKBKG through enhancing its ubiquitination leading to inhibition of both pathways. This chain is Late protein I226R, found in Ornithodoros (relapsing fever ticks).